The primary structure comprises 126 residues: Small ribosomal subunit protein uS13 (126 aa).

The interval 92–126 (RMGLPVRGQRTRTNARTRRGGRRTVAGKKKAPAKK) is disordered. Over residues 100–126 (QRTRTNARTRRGGRRTVAGKKKAPAKK) the composition is skewed to basic residues.

Belongs to the universal ribosomal protein uS13 family. In terms of assembly, part of the 30S ribosomal subunit. Forms a loose heterodimer with protein S19. Forms two bridges to the 50S subunit in the 70S ribosome.

Its function is as follows. Located at the top of the head of the 30S subunit, it contacts several helices of the 16S rRNA. In the 70S ribosome it contacts the 23S rRNA (bridge B1a) and protein L5 of the 50S subunit (bridge B1b), connecting the 2 subunits; these bridges are implicated in subunit movement. Contacts the tRNAs in the A and P-sites. In Cyanothece sp. (strain PCC 7425 / ATCC 29141), this protein is Small ribosomal subunit protein uS13.